A 299-amino-acid polypeptide reads, in one-letter code: Oxaloacetate decarboxylase (299 aa).

Residue Ser57 participates in substrate binding. Mg(2+) is bound at residue Asp95. Substrate-binding residues include Arg167 and His243.

Belongs to the isocitrate lyase/PEP mutase superfamily. Oxaloacetate decarboxylase family. Homotetramer; dimer of dimers. Mg(2+) serves as cofactor.

The enzyme catalyses oxaloacetate + H(+) = pyruvate + CO2. Functionally, catalyzes the decarboxylation of oxaloacetate into pyruvate. Seems to play a role in maintaining cellular concentrations of bicarbonate and pyruvate. The chain is Oxaloacetate decarboxylase from Paraburkholderia xenovorans (strain LB400).